Consider the following 195-residue polypeptide: MKIGIVTGIPGVGKTTVLSFADKILTEKGISHKIVNYGDYMLNTALKEGYVKSRDEIRKLQIEKQRELQALAARRIVEDLSLLGDEGIGLIDTHAVIRTPAGYLPGLPRHVIEVLSPKVIFLLEADPKIILERQKRDSSRARTDYSDTAVINEVIQFARYSAMASAVLVGASVKVVVNQEGDPSIAASEIINSLM.

ATP is bound at residue 8–16; it reads GIPGVGKTT.

Belongs to the archaeal adenylate kinase family. Homotrimer.

Its subcellular location is the cytoplasm. The enzyme catalyses AMP + ATP = 2 ADP. The polypeptide is Adenylate kinase (adkA) (Saccharolobus solfataricus (strain ATCC 35092 / DSM 1617 / JCM 11322 / P2) (Sulfolobus solfataricus)).